A 205-amino-acid polypeptide reads, in one-letter code: Adenylyl-sulfate kinase (205 aa).

31-38 (GLSGAGKS) is an ATP binding site. Serine 105 (phosphoserine intermediate) is an active-site residue.

The protein belongs to the APS kinase family.

It catalyses the reaction adenosine 5'-phosphosulfate + ATP = 3'-phosphoadenylyl sulfate + ADP + H(+). Its pathway is sulfur metabolism; hydrogen sulfide biosynthesis; sulfite from sulfate: step 2/3. Its function is as follows. Catalyzes the synthesis of activated sulfate. The protein is Adenylyl-sulfate kinase of Shewanella baltica (strain OS223).